The sequence spans 382 residues: Lipid-A-disaccharide synthase (382 aa).

It belongs to the LpxB family.

The catalysed reaction is 2-N,3-O-bis[(3R)-3-hydroxytetradecanoyl]-alpha-D-glucosaminyl 1-phosphate + UDP-2-N,3-O-bis[(3R)-3-hydroxytetradecanoyl]-alpha-D-glucosamine = lipid A disaccharide (E. coli) + UDP + H(+). It carries out the reaction a lipid X + a UDP-2-N,3-O-bis[(3R)-3-hydroxyacyl]-alpha-D-glucosamine = a lipid A disaccharide + UDP + H(+). Its pathway is glycolipid biosynthesis; lipid IV(A) biosynthesis; lipid IV(A) from (3R)-3-hydroxytetradecanoyl-[acyl-carrier-protein] and UDP-N-acetyl-alpha-D-glucosamine: step 5/6. Functionally, condensation of UDP-2,3-diacylglucosamine and 2,3-diacylglucosamine-1-phosphate to form lipid A disaccharide, a precursor of lipid A, a phosphorylated glycolipid that anchors the lipopolysaccharide to the outer membrane of the cell. The chain is Lipid-A-disaccharide synthase from Enterobacter sp. (strain 638).